Consider the following 93-residue polypeptide: Defensin-like protein 229 (93 aa).

The first 19 residues, 1–19 (MKSTTLFMVSCVLIFCVLS), serve as a signal peptide directing secretion. Disulfide bonds link C38–C93, C48–C72, C56–C84, and C70–C86.

The protein belongs to the DEFL family. In terms of tissue distribution, flower buds.

The protein localises to the secreted. This Arabidopsis thaliana (Mouse-ear cress) protein is Defensin-like protein 229 (SCRL27).